The primary structure comprises 524 residues: Lysine--tRNA ligase (524 aa).

The short motif at 39–47 (ASGIPHMGS) is the 'HIGH' region element. The short motif at 294–298 (KISKS) is the 'KMSKS' region element. Lysine 297 contacts ATP.

Belongs to the class-I aminoacyl-tRNA synthetase family.

The protein localises to the cytoplasm. The catalysed reaction is tRNA(Lys) + L-lysine + ATP = L-lysyl-tRNA(Lys) + AMP + diphosphate. The polypeptide is Lysine--tRNA ligase (lysS) (Cenarchaeum symbiosum).